The following is a 472-amino-acid chain: H(+)/Cl(-) exchange transporter ClcA (472 aa).

The Cytoplasmic portion of the chain corresponds to 1 to 32; the sequence is MKAETPSFEAHQFVRVRRGDAVRRLIQRDKTP. Residues 33 to 69 form a helical membrane-spanning segment; sequence LAVLFMAAVVGTLAGLVGVAFEKSVNWVQNQRIGALA. Residues 70-76 lie on the Periplasmic side of the membrane; sequence QVADHWY. Residues 77–100 form a helical membrane-spanning segment; it reads LVWPLAFILSALLAMVGYFLVRRF. The Selectivity filter part_1 motif lies at 106 to 110; that stretch reads GSGIP. S107 is a binding site for chloride. The segment at residues 109 to 116 is an intramembrane region (helical); sequence IPEIEGAL. The Cytoplasmic segment spans residues 117–123; the sequence is EELRPVR. 2 helical membrane-spanning segments follow: residues 124–141 and 148–166; these read WWRV…TLGA and EGPM…LDVF. The Selectivity filter part_2 motif lies at 146–150; the sequence is GREGP. The Cytoplasmic segment spans residues 167 to 176; sequence RMRSPEARHT. 2 consecutive intramembrane regions (helical) follow at residues 177–189 and 193–201; these read LLAT…LSAA and PLAGILFII. Residues 202-214 lie on the Cytoplasmic side of the membrane; the sequence is EEMRPQFRYNLIS. Residues 215-232 form a helical membrane-spanning segment; that stretch reads IKAVFTGVIMSSIVFRIF. Topologically, residues 233-252 are periplasmic; the sequence is NGEAAIIEVGKLSNAPVNTL. The chain crosses the membrane as a helical span at residues 253 to 281; sequence WLYLVLGMLFGCFGPLFNFLVLRTQDLFQ. Topologically, residues 282–287 are cytoplasmic; sequence RIHGGN. Residues 288–309 form a helical membrane-spanning segment; it reads IKKWVLIGGLIGGLCGLLGLMQ. Topologically, residues 310–329 are periplasmic; it reads PSAVGGGFNLIPIAAAGNFS. Helical transmembrane passes span 330–349 and 355–376; these read VGLL…ICFS and GIFA…MAAI. The Selectivity filter part_3 motif lies at 355 to 359; sequence GIFAP. Chloride contacts are provided by I356 and F357. Over 377 to 386 the chain is Periplasmic; it reads PLFPAYHLDA. Positions 387 to 401 form an intramembrane region, helical; that stretch reads GTFAIAGMGALLAAS. The note=Loop between two helices intramembrane region spans 402-404; sequence VRA. An intramembrane region (helical) is located at residues 405-416; sequence PLTGIVLVLEMT. The note=Loop between two helices intramembrane region spans 417–421; sequence DNYQL. Residues 422–438 traverse the membrane as a helical segment; sequence ILPMIITCLGATLLAQF. The Cytoplasmic portion of the chain corresponds to 439 to 472; the sequence is LGGKPLYSTILQRTLAKQEAEQAAKAQQAPRENT. Y445 contacts chloride.

This sequence belongs to the chloride channel (TC 2.A.49) family. ClcA subfamily. As to quaternary structure, homodimer.

Its subcellular location is the cell inner membrane. It carries out the reaction 2 chloride(in) + H(+)(out) = 2 chloride(out) + H(+)(in). In terms of biological role, proton-coupled chloride transporter. Functions as antiport system and exchanges two chloride ions for 1 proton. Probably acts as an electrical shunt for an outwardly-directed proton pump that is linked to amino acid decarboxylation, as part of the extreme acid resistance (XAR) response. The sequence is that of H(+)/Cl(-) exchange transporter ClcA from Klebsiella pneumoniae subsp. pneumoniae (strain ATCC 700721 / MGH 78578).